The sequence spans 572 residues: 2-isopropylmalate synthase (572 aa).

The Pyruvate carboxyltransferase domain maps to 31 to 305 (PIWMSTDLRD…DPGLDFSNIN (275 aa)). Mg(2+)-binding residues include D40, H244, H246, and N280. Positions 437-572 (NTAPIHYVGH…MNDAAESVGV (136 aa)) are regulatory domain.

It belongs to the alpha-IPM synthase/homocitrate synthase family. LeuA type 2 subfamily. Homodimer. It depends on Mg(2+) as a cofactor.

The protein localises to the cytoplasm. It carries out the reaction 3-methyl-2-oxobutanoate + acetyl-CoA + H2O = (2S)-2-isopropylmalate + CoA + H(+). Its pathway is amino-acid biosynthesis; L-leucine biosynthesis; L-leucine from 3-methyl-2-oxobutanoate: step 1/4. In terms of biological role, catalyzes the condensation of the acetyl group of acetyl-CoA with 3-methyl-2-oxobutanoate (2-ketoisovalerate) to form 3-carboxy-3-hydroxy-4-methylpentanoate (2-isopropylmalate). The sequence is that of 2-isopropylmalate synthase from Paraburkholderia phytofirmans (strain DSM 17436 / LMG 22146 / PsJN) (Burkholderia phytofirmans).